An 89-amino-acid chain; its full sequence is Small ribosomal subunit protein uS15 (89 aa).

This sequence belongs to the universal ribosomal protein uS15 family. In terms of assembly, part of the 30S ribosomal subunit. Forms a bridge to the 50S subunit in the 70S ribosome, contacting the 23S rRNA.

One of the primary rRNA binding proteins, it binds directly to 16S rRNA where it helps nucleate assembly of the platform of the 30S subunit by binding and bridging several RNA helices of the 16S rRNA. Its function is as follows. Forms an intersubunit bridge (bridge B4) with the 23S rRNA of the 50S subunit in the ribosome. The polypeptide is Small ribosomal subunit protein uS15 (Thermus thermophilus (strain ATCC BAA-163 / DSM 7039 / HB27)).